A 31-amino-acid chain; its full sequence is Sarcolipin (31 aa).

At 1-7 the chain is on the cytoplasmic side; the sequence is MERSTRE. A helical transmembrane segment spans residues 8–26; sequence LCLNFTVVLITVILIWLLV. The Lumenal portion of the chain corresponds to 27 to 31; that stretch reads RSYQY.

It belongs to the sarcolipin family. In terms of assembly, homooligomer. Can also form heterooligomers with other sarcoplasmic/endoplasmic reticulum calcium ATPase (SERCA) regulators ARLN, ERLN, PLN and STRIT1/DWORF. Monomer. Interacts with calcium ATPase ATP2A1/SERCA1. Interacts as a monomer with ATP2A2/SERCA2; the interaction decreases ATP2A2 Ca(2+) affinity. Interacts with VMP1; VMP1 competes with PLN and SLN to prevent them from forming an inhibitory complex with ATP2A2. In terms of tissue distribution, skeletal muscle (at protein level).

The protein resides in the sarcoplasmic reticulum membrane. It localises to the endoplasmic reticulum membrane. Reversibly inhibits the activity of ATP2A1/SERCA1 and ATP2A2/SERCA2 in sarcoplasmic reticulum by decreasing the apparent affinity of the ATPase for Ca(2+). Also inhibits the activity of ATP2A3/SERCA3. Modulates calcium re-uptake during muscle relaxation and plays an important role in calcium homeostasis in muscle. Required for muscle-based, non-shivering thermogenesis. This is Sarcolipin (SLN) from Oryctolagus cuniculus (Rabbit).